A 974-amino-acid polypeptide reads, in one-letter code: MSSKKYELDAAAFEDKPESHSDAEMTPQKPQRRQSVLSKAVSEHDERATGPATDLLPPSKGLTTEEAEELLKKYGRNELPEKKTPSWLIYVRGLWGPMPAALWIAIIIEFALENWPDGAILFAIQIANATIGWYETIKAGDAVAALKNSLKPTATVYRDSKWQQIDAAVLVPGDLVKLASGSAVPADCSINEGVIDVDEAALTGESLPVTMGPEHMPKMGSNVVRGEVEGTVQYTGSLTFFGKTAALLQSVESDLGNIHVILRRVMLALCAISFILCMCCFIYLLARFYETFRHALQFAVVVLVVSIPIALEIVVTTTLAVGSKHLSKHKIIVTKLSAIEMMSGVNMLCSDKTGTLTLNKMEIQEQCFTFEEGNDLKSTLVLAALAAKWREPPRDALDTMVLGAADLDECDNYQQLNFVPFDPTTKRTAATLVDRRSGEKFDVTKGAPHVILQMVYNQDEINDEVVDIIDSLAARGVRCLSVAKTDQQGRWHMAGILTFLDPPRPDTKDTIRRSKEYGVDVKMITGDHLLIAKEMCRMLDLDPNILTADKLPQIKDANDLPEDLGEKYGDMMLSVGGFAQVFPEHKFMIVETLRQRGYTCAMTGDGVNDAPALKRADVGIAVHGATDAARAAADMVLTEPGLSVVVEAMLVSREVFQRMLSFLTYRISATLQLVCFFFIACFSLTPKAYGSVDPNFQFFHLPVLMFMLITLLNDGCLMTIGYDHVIPSERPQKWNLPVVFVSASILAAVACGSSLMLLWIGLEGYSSQYYENSWFHRLGLAQLPQGKLVTMMYLKISISDFLTLFSSRTGGHFFFYVPPSPILFCGAIISLLVSTMAASFWHKSRPDNVLTEGLAWGQTNAEKLLPLWVWIYCIVWWFVQDVVKVLAHICMDAVDLFGCVSDASGSGPIKPYSDDMKVNGFEPVKKPAEKSTEKALNLSVSSGPHKALEGLREDTHVLNESTSPVNAFSPKVKK.

The span at 1–23 (MSSKKYELDAAAFEDKPESHSDA) shows a compositional bias: basic and acidic residues. The segment at 1–61 (MSSKKYELDA…ATDLLPPSKG (61 aa)) is disordered. The next 4 helical transmembrane spans lie at 93 to 112 (GLWGPMPAALWIAIIIEFAL), 118 to 137 (GAILFAIQIANATIGWYETI), 265 to 286 (VMLALCAISFILCMCCFIYLLA), and 295 to 321 (ALQFAVVVLVVSIPIALEIVVTTTLAV). Aspartate 351 functions as the 4-aspartylphosphate intermediate in the catalytic mechanism. Helical transmembrane passes span 631–651 (AAADMVLTEPGLSVVVEAMLV), 662–684 (FLTYRISATLQLVCFFFIACFSL), 698–712 (FFHLPVLMFMLITLL), 738–761 (VVFVSASILAAVACGSSLMLLWIG), 813–840 (FFFYVPPSPILFCGAIISLLVSTMAASF), and 869–887 (VWIYCIVWWFVQDVVKVLA). The segment at 952 to 974 (REDTHVLNESTSPVNAFSPKVKK) is disordered.

Belongs to the cation transport ATPase (P-type) (TC 3.A.3) family. Type IIIA subfamily.

Its subcellular location is the membrane. It catalyses the reaction ATP + H2O + H(+)(in) = ADP + phosphate + 2 H(+)(out). The sequence is that of Probable proton ATPase 1B (H1B) from Leishmania donovani.